Here is a 275-residue protein sequence, read N- to C-terminus: Phosphate import ATP-binding protein PstB 1 (275 aa).

In terms of domain architecture, ABC transporter spans Phe22–Pro261. Position 54–61 (Gly54–Ser61) interacts with ATP.

This sequence belongs to the ABC transporter superfamily. Phosphate importer (TC 3.A.1.7) family. As to quaternary structure, the complex is composed of two ATP-binding proteins (PstB), two transmembrane proteins (PstC and PstA) and a solute-binding protein (PstS).

The protein localises to the cell inner membrane. It catalyses the reaction phosphate(out) + ATP + H2O = ADP + 2 phosphate(in) + H(+). Part of the ABC transporter complex PstSACB involved in phosphate import. Responsible for energy coupling to the transport system. The sequence is that of Phosphate import ATP-binding protein PstB 1 from Trichormus variabilis (strain ATCC 29413 / PCC 7937) (Anabaena variabilis).